The sequence spans 199 residues: Probable GTP-binding protein EngB (199 aa).

The EngB-type G domain maps to 28 to 199 (DLPEIALAGR…ESWDTILEYL (172 aa)). GTP is bound by residues 36 to 43 (GRSNVGKS), 63 to 67 (GKTQL), 81 to 84 (DVPG), 148 to 151 (TKAD), and 180 to 182 (FSS). Ser-43 and Thr-65 together coordinate Mg(2+).

Belongs to the TRAFAC class TrmE-Era-EngA-EngB-Septin-like GTPase superfamily. EngB GTPase family. The cofactor is Mg(2+).

In terms of biological role, necessary for normal cell division and for the maintenance of normal septation. This Streptococcus equi subsp. equi (strain 4047) protein is Probable GTP-binding protein EngB.